A 108-amino-acid polypeptide reads, in one-letter code: T-cell acute lymphocytic leukemia protein 2 (108 aa).

The bHLH domain maps to 2-54 (TRKIFTNTRERWRQQNVNSAFAKLRKLIPTHPPDKKLSKNETLRLAMRYINFL). The segment at 89 to 108 (DRTLLENYQVPSPGPSHHIP) is disordered.

In Homo sapiens (Human), this protein is T-cell acute lymphocytic leukemia protein 2 (TAL2).